The chain runs to 237 residues: CD63 antigen (237 aa).

Residues 1–11 (MAVEGGMKCVK) are Cytoplasmic-facing. The helical transmembrane segment at 12-32 (FLLYVLLLVFCACAVGLIAVG) threads the bilayer. Residues 33-51 (VGTHLVLNQTITHGATPSF) lie on the Extracellular side of the membrane. An N-linked (GlcNAc...) asparagine glycan is attached at Asn40. Residues 52 to 72 (LLPVVIIAVGAFLFLVAFVGC) traverse the membrane as a helical segment. Residues 73–81 (CGACKENYC) lie on the Cytoplasmic side of the membrane. Residues 82 to 102 (LMITFAIFLSLIMLVEVAAAI) traverse the membrane as a helical segment. The Extracellular portion of the chain corresponds to 103 to 202 (AGYVFRDKVR…KIAAWLRKNV (100 aa)). N-linked (GlcNAc...) asparagine glycosylation is found at Asn130, Asn150, and Asn171. A helical transmembrane segment spans residues 203–223 (LVVAAAALGIAFVEILGIVLA). The Cytoplasmic segment spans residues 224-237 (CCLVKSIRSGYEVM). Positions 233-237 (GYEVM) match the Lysosomal targeting motif motif.

This sequence belongs to the tetraspanin (TM4SF) family. Interacts with TIMP1 and ITGB1 and recruits TIMP1 to ITGB1. Interacts with CD9. Identified in a complex with CD9 and ITGB3. Interacts with PMEL. Interacts with KDR/VEGFR2; identified in a complex with ITGB1 and KDR/VEGFR2 and is required to recruit KDR to ITGB1 complexes. Interacts with SYT7. Palmitoylated at a low, basal level in unstimulated platelets. The level of palmitoylation increases when platelets are activated by thrombin (in vitro).

It localises to the cell membrane. The protein localises to the lysosome membrane. It is found in the late endosome membrane. The protein resides in the endosome. Its subcellular location is the multivesicular body. It localises to the melanosome. The protein localises to the secreted. It is found in the extracellular exosome. The protein resides in the cell surface. Its function is as follows. Functions as a cell surface receptor for TIMP1 and plays a role in the activation of cellular signaling cascades. Plays a role in the activation of ITGB1 and integrin signaling, leading to the activation of AKT, FAK/PTK2 and MAP kinases. Promotes cell survival, reorganization of the actin cytoskeleton, cell adhesion, spreading and migration, via its role in the activation of AKT and FAK/PTK2. Plays a role in VEGFA signaling via its role in regulating the internalization of KDR/VEGFR2. Plays a role in intracellular vesicular transport processes, and is required for normal trafficking of the PMEL luminal domain that is essential for the development and maturation of melanocytes. Plays a role in the adhesion of leukocytes onto endothelial cells via its role in the regulation of SELP trafficking. May play a role in mast cell degranulation in response to Ms4a2/FceRI stimulation, but not in mast cell degranulation in response to other stimuli. The chain is CD63 antigen (CD63) from Bos taurus (Bovine).